A 1637-amino-acid chain; its full sequence is Surface protein (1637 aa).

The signal sequence occupies residues 1–48 (MNKNSKKKLDFLPNKLNKYSIRRFTVGTASILVGATLIFGVANDQAEA). Disordered stretches follow at residues 49–305 (AENN…RTQV), 689–719 (VQKG…GEPT), and 739–1611 (PQGH…NGTL). Residues 56-65 (KQDDSSDASK) are compositionally biased toward basic and acidic residues. Polar residues predominate over residues 69-83 (NVQTIEQSSANSNES). Composition is skewed to basic and acidic residues over residues 90-106 (DVTK…EKAN), 127-180 (EAPK…KATT), and 188-264 (ETSK…KVET). Residues 289–298 (AKSNSNAQPS) show a composition bias toward polar residues. G5 domains follow at residues 654 to 737 (QADL…TPEE), 783 to 865 (HGPK…GGEE), 911 to 993 (HGPK…GGEE), 1039 to 1121 (HGPK…GGEE), and 1167 to 1250 (HGPK…APEI). A compositionally biased stretch (basic and acidic residues) spans 779–817 (DVTKHGPKAGEPEVTKEEIPFEKKREFNPDLKPGEEKVT). Positions 818–832 (QEGQTGEKTTTTPTT) are enriched in low complexity. Positions 907 to 945 (DVTKHGPKAGEPEVTKEEIPFEKKREFNPDLKPGEEKVT) are enriched in basic and acidic residues. The segment covering 946-960 (QEGQTGEKTTTTPTT) has biased composition (low complexity). The span at 1035–1073 (DVTKHGPKAGEPEVTKEEIPFEKKREFNPDLKPGEEKVT) shows a compositional bias: basic and acidic residues. The segment covering 1074–1088 (QEGQTGEKTTTTPTT) has biased composition (low complexity). Basic and acidic residues predominate over residues 1163–1189 (DVTKHGPKAGEPEVTKEEIPYETKRVL). 2 stretches are compositionally biased toward acidic residues: residues 1282–1291 (TGEIIEEPQD) and 1302–1580 (SDAD…DSDS). Repeat copies occupy residues 1301 to 1302 (DS), 1303 to 1304 (DA), 1305 to 1306 (DS), 1307 to 1308 (DS), 1309 to 1310 (DA), 1311 to 1312 (DS), 1313 to 1314 (DS), 1315 to 1316 (DA), 1317 to 1318 (DS), 1319 to 1320 (DS), 1321 to 1322 (DA), 1323 to 1324 (DS), 1325 to 1326 (DS), 1327 to 1328 (DA), 1329 to 1330 (DS), 1331 to 1332 (DS), 1333 to 1334 (DS), 1335 to 1336 (DS), 1337 to 1338 (DS), 1339 to 1340 (DS), 1341 to 1342 (DS), 1343 to 1344 (DS), 1345 to 1346 (DA), 1347 to 1348 (DS), 1349 to 1350 (DS), 1351 to 1352 (DS), 1353 to 1354 (DS), 1355 to 1356 (DS), 1357 to 1358 (DA), 1359 to 1360 (DS), 1361 to 1362 (DS), 1363 to 1364 (DA), 1365 to 1366 (DS), 1367 to 1368 (DS), 1369 to 1370 (DA), 1371 to 1372 (DS), 1373 to 1374 (DS), 1375 to 1376 (DS), 1377 to 1378 (DA), 1379 to 1380 (DS), 1381 to 1382 (DS), 1383 to 1384 (DS), 1385 to 1386 (DA), 1387 to 1388 (DS), 1389 to 1390 (DS), 1391 to 1392 (DS), 1393 to 1394 (DS), 1395 to 1396 (DS), 1397 to 1398 (DA), 1399 to 1400 (DS), 1401 to 1402 (DS), 1403 to 1404 (DS), 1405 to 1406 (DS), 1407 to 1408 (DS), 1409 to 1410 (DA), 1411 to 1412 (DS), 1413 to 1414 (DS), 1415 to 1416 (DA), 1417 to 1418 (DS), 1419 to 1420 (DS), 1421 to 1422 (DS), 1423 to 1424 (DS), 1425 to 1426 (DS), 1427 to 1428 (DA), 1429 to 1430 (DS), 1431 to 1432 (DS), 1433 to 1434 (DS), 1435 to 1436 (DS), 1437 to 1438 (DS), 1439 to 1440 (DA), 1441 to 1442 (DS), 1443 to 1444 (DS), 1445 to 1446 (DA), 1447 to 1448 (DS), 1449 to 1450 (DS), 1451 to 1452 (DA), 1453 to 1454 (DS), 1455 to 1456 (DS), 1457 to 1458 (DA), 1459 to 1460 (DS), 1461 to 1462 (DS), 1463 to 1464 (DS), 1465 to 1466 (DS), 1467 to 1468 (DS), 1469 to 1470 (DA), 1471 to 1472 (DS), 1473 to 1474 (DS), 1475 to 1476 (DA), 1477 to 1478 (DS), 1479 to 1480 (DS), 1481 to 1482 (DA), 1483 to 1484 (DS), 1485 to 1486 (DS), 1487 to 1488 (DA), 1489 to 1490 (DS), 1491 to 1492 (DS), 1493 to 1494 (DS), 1495 to 1496 (DS), 1497 to 1498 (DS), 1499 to 1500 (DA), 1501 to 1502 (DS), 1503 to 1504 (DS), 1505 to 1506 (DS), 1507 to 1508 (DS), 1509 to 1510 (DS), 1511 to 1512 (DS), 1513 to 1514 (DA), 1515 to 1516 (DS), 1517 to 1518 (DS), 1519 to 1520 (DA), 1521 to 1522 (DS), 1523 to 1524 (DS), 1525 to 1526 (DS), 1527 to 1528 (DA), 1529 to 1530 (DS), 1531 to 1532 (DS), 1533 to 1534 (DA), 1535 to 1536 (DS), 1537 to 1538 (DS), 1539 to 1540 (DA), 1541 to 1542 (DG), 1543 to 1544 (DS), 1545 to 1546 (DA), 1547 to 1548 (DS), 1549 to 1550 (DS), 1551 to 1552 (DA), 1553 to 1554 (DS), 1555 to 1556 (DS), 1557 to 1558 (DS), 1559 to 1560 (DS), 1561 to 1562 (DS), 1563 to 1564 (DS), 1565 to 1566 (DS), 1567 to 1568 (DS), 1569 to 1570 (DA), 1571 to 1572 (DS), 1573 to 1574 (DS), 1575 to 1576 (DS), 1577 to 1578 (DS), 1579 to 1580 (DS), and 1581 to 1582 (DA). Positions 1301–1582 (DSDADSDSDA…DSDSDSDSDA (282 aa)) are 141 X 2 AA tandem repeats of D-[SAG]. A compositionally biased stretch (basic and acidic residues) spans 1581 to 1599 (DADRDHNDKTDKPNNKELP). The LPXTG sorting signal motif lies at 1598-1602 (LPDTG). Thr1601 is modified (pentaglycyl murein peptidoglycan amidated threonine). The propeptide at 1602-1637 (GNDAQNNGTLFGSLFAALGGLFLVGRRRKNKNNEEK) is removed by sortase.

The protein localises to the secreted. The protein resides in the cell wall. Functionally, could have a role in preventing adhesion at some stages during an infection. The polypeptide is Surface protein (pls) (Staphylococcus aureus).